The sequence spans 85 residues: ATP synthase subunit c (85 aa).

2 helical membrane-spanning segments follow: residues 10-30 and 53-73; these read IAVA…FAVL and FIIA…ALLF.

It belongs to the ATPase C chain family. F-type ATPases have 2 components, F(1) - the catalytic core - and F(0) - the membrane proton channel. F(1) has five subunits: alpha(3), beta(3), gamma(1), delta(1), epsilon(1). F(0) has three main subunits: a(1), b(2) and c(10-14). The alpha and beta chains form an alternating ring which encloses part of the gamma chain. F(1) is attached to F(0) by a central stalk formed by the gamma and epsilon chains, while a peripheral stalk is formed by the delta and b chains.

It localises to the cell inner membrane. F(1)F(0) ATP synthase produces ATP from ADP in the presence of a proton or sodium gradient. F-type ATPases consist of two structural domains, F(1) containing the extramembraneous catalytic core and F(0) containing the membrane proton channel, linked together by a central stalk and a peripheral stalk. During catalysis, ATP synthesis in the catalytic domain of F(1) is coupled via a rotary mechanism of the central stalk subunits to proton translocation. In terms of biological role, key component of the F(0) channel; it plays a direct role in translocation across the membrane. A homomeric c-ring of between 10-14 subunits forms the central stalk rotor element with the F(1) delta and epsilon subunits. This is ATP synthase subunit c from Vibrio cholerae serotype O1 (strain ATCC 39315 / El Tor Inaba N16961).